The following is a 132-amino-acid chain: MMNMIEWTKHVLESDDTKLIYWLTLLMVCMIVDTILGIVIARINPKEKFSSFKMKTGILIKVSEMIIALLAVPFALPFPAGLPLLYTVYTALCVSEMYSIFGHLRVVDDKSNFLSIIEGFFKQTYRKDKGDK.

At methionine 1 to aspartate 16 the chain is on the periplasmic side. Cytoplasmic-side segments run methionine 1–lysine 61 and valine 39–isoleucine 58. The chain crosses the membrane as a helical span at residues threonine 17–isoleucine 38. A helical transmembrane segment spans residues valine 62–alanine 80. The Periplasmic segment spans residues glycine 81–leucine 85. Residues tyrosine 86–valine 107 traverse the membrane as a helical segment. Residues aspartate 108 to lysine 132 are Cytoplasmic-facing.

The protein belongs to the bacteriophage holin family. phi29likevirus holin subfamily. Homomultimer. Interacts with isoform Antiholin; this interaction blocks the holin homomultimerization and delays host cell lysis.

The protein localises to the host cell inner membrane. Its function is as follows. Accumulates harmlessly in the cytoplasmic membrane until it reaches a critical concentration that triggers the formation of micron-scale pores (holes) causing host cell membrane disruption and endolysin escape into the periplasmic space. Determines the precise timing of host cell lysis. Participates with the endolysin and spanin proteins in the sequential events which lead to the programmed host cell lysis releasing the mature viral particles from the host cell. Counteracts the aggregation of the holin molecules and thus of pore formation. The sequence is that of Antiholin (14) from Bacillus phage B103 (Bacteriophage B103).